The chain runs to 231 residues: Ribosomal RNA small subunit methyltransferase nep-1 (231 aa).

S-adenosyl-L-methionine is bound by residues methionine 161, glycine 188, glycine 193, and 206 to 211 (ISNYPL).

The protein belongs to the class IV-like SAM-binding methyltransferase superfamily. RNA methyltransferase NEP1 family. Homodimer.

It is found in the nucleus. The protein resides in the nucleolus. The enzyme catalyses a pseudouridine in rRNA + S-adenosyl-L-methionine = an N(1)-methylpseudouridine in rRNA + S-adenosyl-L-homocysteine + H(+). S-adenosyl-L-methionine-dependent pseudouridine N(1)-methyltransferase that methylates a pseudouridine in 18S rRNA. Involved the biosynthesis of the hypermodified N1-methyl-N3-(3-amino-3-carboxypropyl) pseudouridine (m1acp3-Psi) conserved in eukaryotic 18S rRNA. Also has an essential role in 40S ribosomal subunit biogenesis independent on its methyltransferase activity, facilitating the incorporation of ribosomal protein S19 during the formation of pre-ribosomes. The sequence is that of Ribosomal RNA small subunit methyltransferase nep-1 from Caenorhabditis elegans.